We begin with the raw amino-acid sequence, 287 residues long: Nuclease S1 (287 aa).

Positions 1-20 (MPRLLPISAATLALAQLTYG) are cleaved as a signal peptide. A divalent metal cation-binding residues include W21, H26, D65, and H80. Substrate is bound by residues 21–26 (WGNLGH), 65–71 (DTYKYTD), 80–83 (HFID), and 93–98 (GVDYDR). Cystine bridges form between C92/C236 and C100/C105. N112 and N122 each carry an N-linked (GlcNAc...) asparagine glycan. A divalent metal cation contacts are provided by H135, D139, H145, H168, and D172. The substrate binding stretch occupies residues 135–183 (HIIGDIHQPLHDENLEAGGNGIDVTYDGETTNLHHIWDTNMPEEAAGGY). Residue N248 is glycosylated (N-linked (GlcNAc...) asparagine).

Belongs to the nuclease type I family. As to quaternary structure, monomer. It depends on Zn(2+) as a cofactor.

It catalyses the reaction Endonucleolytic cleavage to 5'-phosphomononucleotide and 5'-phosphooligonucleotide end-products.. With respect to regulation, inhibited by inorganic phosphate (Pi). Its function is as follows. Hydrolyzes only single-stranded DNA and RNA without apparent specificity for bases. In Aspergillus oryzae (strain ATCC 42149 / RIB 40) (Yellow koji mold), this protein is Nuclease S1.